Consider the following 120-residue polypeptide: Large ribosomal subunit protein bL36m (120 aa).

It belongs to the bacterial ribosomal protein bL36 family. Component of the mitochondrial ribosome large subunit (39S) which comprises a 16S rRNA and about 50 distinct proteins.

It is found in the mitochondrion. This is Large ribosomal subunit protein bL36m (mrpl36) from Osmerus mordax (Rainbow smelt).